Consider the following 124-residue polypeptide: Alpha-amylase inhibitor 0.53 (124 aa).

4 disulfide bridges follow: cysteine 20–cysteine 41, cysteine 28–cysteine 83, cysteine 42–cysteine 99, and cysteine 54–cysteine 115.

It belongs to the protease inhibitor I6 (cereal trypsin/alpha-amylase inhibitor) family. As to quaternary structure, homodimer. In terms of processing, the disulfide bonds are essential for the inhibitor activity. In terms of tissue distribution, endosperm.

It is found in the secreted. In terms of biological role, alpha-amylase inhibitor. In Triticum aestivum (Wheat), this protein is Alpha-amylase inhibitor 0.53.